The chain runs to 468 residues: UDP-N-acetylmuramoylalanine--D-glutamate ligase (468 aa).

Residue 117 to 123 participates in ATP binding; sequence GTDGKTT.

The protein belongs to the MurCDEF family.

The protein localises to the cytoplasm. It catalyses the reaction UDP-N-acetyl-alpha-D-muramoyl-L-alanine + D-glutamate + ATP = UDP-N-acetyl-alpha-D-muramoyl-L-alanyl-D-glutamate + ADP + phosphate + H(+). It participates in cell wall biogenesis; peptidoglycan biosynthesis. Cell wall formation. Catalyzes the addition of glutamate to the nucleotide precursor UDP-N-acetylmuramoyl-L-alanine (UMA). The sequence is that of UDP-N-acetylmuramoylalanine--D-glutamate ligase from Chloroherpeton thalassium (strain ATCC 35110 / GB-78).